We begin with the raw amino-acid sequence, 322 residues long: Tyrosine recombinase XerC (322 aa).

Residues 1–25 form a disordered region; the sequence is MPEAAPPVADARGSSPTATTGPGAD. Residues 16 to 25 show a composition bias toward low complexity; it reads PTATTGPGAD. Residues 25 to 111 form the Core-binding (CB) domain; sequence DATLSAVEPF…ACRSYYAWLL (87 aa). In terms of domain architecture, Tyr recombinase spans 132–309; that stretch reads KLPQVLDADE…DFQHLAKVYD (178 aa). Active-site residues include Arg-171, Lys-195, His-261, Arg-264, and His-287. Catalysis depends on Tyr-296, which acts as the O-(3'-phospho-DNA)-tyrosine intermediate.

The protein belongs to the 'phage' integrase family. XerC subfamily. In terms of assembly, forms a cyclic heterotetrameric complex composed of two molecules of XerC and two molecules of XerD.

It is found in the cytoplasm. Its function is as follows. Site-specific tyrosine recombinase, which acts by catalyzing the cutting and rejoining of the recombining DNA molecules. The XerC-XerD complex is essential to convert dimers of the bacterial chromosome into monomers to permit their segregation at cell division. It also contributes to the segregational stability of plasmids. The polypeptide is Tyrosine recombinase XerC (Xanthomonas campestris pv. campestris (strain 8004)).